The sequence spans 241 residues: Geranylgeranylglyceryl phosphate synthase (241 aa).

2 residues coordinate Mg(2+): Asp-26 and Ser-52. Sn-glycerol 1-phosphate contacts are provided by residues 172 to 178 (YFEAGSG), 204 to 205 (GG), and 226 to 227 (GT).

Belongs to the GGGP/HepGP synthase family. Group II subfamily. Mg(2+) is required as a cofactor.

It is found in the cytoplasm. It carries out the reaction sn-glycerol 1-phosphate + (2E,6E,10E)-geranylgeranyl diphosphate = sn-3-O-(geranylgeranyl)glycerol 1-phosphate + diphosphate. It participates in membrane lipid metabolism; glycerophospholipid metabolism. Functionally, prenyltransferase that catalyzes the transfer of the geranylgeranyl moiety of geranylgeranyl diphosphate (GGPP) to the C3 hydroxyl of sn-glycerol-1-phosphate (G1P). This reaction is the first ether-bond-formation step in the biosynthesis of archaeal membrane lipids. This chain is Geranylgeranylglyceryl phosphate synthase, found in Hyperthermus butylicus (strain DSM 5456 / JCM 9403 / PLM1-5).